The sequence spans 168 residues: Transcription antitermination protein NusB (168 aa).

It belongs to the NusB family.

Its function is as follows. Involved in transcription antitermination. Required for transcription of ribosomal RNA (rRNA) genes. Binds specifically to the boxA antiterminator sequence of the ribosomal RNA (rrn) operons. The protein is Transcription antitermination protein NusB of Deinococcus deserti (strain DSM 17065 / CIP 109153 / LMG 22923 / VCD115).